The chain runs to 338 residues: Protein UL141 (338 aa).

Positions 1–25 (MCRRESLRTLPWLFWVLLSCPRLLE) are cleaved as a signal peptide. Residues 37 to 278 (DIAEKMWAEN…DTGMSPWATR (242 aa)) are Extracellular-facing. N-linked (GlcNAc...) asparagine; by host glycans are attached at residues Asn-117, Asn-132, and Asn-147. Residues 279–299 (GIAAFLGFWSIFTVCFLCYLC) traverse the membrane as a helical segment. Over 300–338 (YLQCCGHWCPTPGRGRRGGEGYRRLPTYDSYPGVKKMKR) the chain is Cytoplasmic.

In terms of assembly, interacts with human PVR. Interacts with human TNFRSF10A and TNFRSF10B. Forms a homodimer that engages two TNFRSF10B monomers.

The protein resides in the host endoplasmic reticulum membrane. Evasion of NK cell killing. Blocks surface expression of PVR which is a ligand for NK cell-activating receptors. Binds human PVR in the endoplasmic reticulum and prevents its maturation and transport to the cell surface. Targets also the natural killer cell activating ligand NECTIN2 for proteasome-mediated degradation. Additionally promotes intracellular retention of TNFRSF10A/TRAIL-R1 and TNFRSF10B/TRAIL-R2 and thus down-regulates their cell surface expression. This is Protein UL141 (UL141) from Human cytomegalovirus (strain Merlin) (HHV-5).